We begin with the raw amino-acid sequence, 245 residues long: MHFAGIVAIALATGATAYDLPENLKQIYEKHKSGKCSKELQGGYDNGHSHDGKSFSYCGDIPNAIYLHSSKNGGQYADMDIDCDGANRHAGKCSNDHSGQGETRWKDEVQKLGIDDLDANIHPYVVFGNENDDGDDPEFDPRKHGMEPLSVMAVVCNKKLFYGIWGDTNGHTATGEASLSMAELCFPEEDPSGDSGHEPNDVLYIGFTGKEAVPGKSADWKADSTESFEESIKELGDKLVAGLKA.

Residues 1–17 (MHFAGIVAIALATGATA) form the signal peptide.

This sequence belongs to the glycosyl hydrolase 75 family.

The protein resides in the secreted. The catalysed reaction is Endohydrolysis of beta-(1-&gt;4)-linkages between D-glucosamine residues in a partly acetylated chitosan.. Functionally, chitosanase catalyzing the endo-type cleavage of chitosan, the deacylated form of chitin. Chitosanase may be crucial in the degradation of the deacetylated portion of chitin in the fungal cell wall. Chitoolisaccharides produced by the hydrolysis of partially N-acetylated chitosan are known to have many biological activities, including antibacterial activity, immune-enhancing effects, and elicitor activity. The sequence is that of Endo-chitosanase (csn) from Aspergillus oryzae (strain ATCC 42149 / RIB 40) (Yellow koji mold).